Consider the following 554-residue polypeptide: Hydroxylamine reductase (554 aa).

Positions 3, 6, 18, and 25 each coordinate [2Fe-2S] cluster. Histidine 252, glutamate 276, cysteine 320, cysteine 408, cysteine 436, cysteine 461, glutamate 495, and lysine 497 together coordinate hybrid [4Fe-2O-2S] cluster. The residue at position 408 (cysteine 408) is a Cysteine persulfide.

It belongs to the HCP family. Requires [2Fe-2S] cluster as cofactor. The cofactor is hybrid [4Fe-2O-2S] cluster.

Its subcellular location is the cytoplasm. The enzyme catalyses A + NH4(+) + H2O = hydroxylamine + AH2 + H(+). Catalyzes the reduction of hydroxylamine to form NH(3) and H(2)O. The polypeptide is Hydroxylamine reductase (Shewanella baltica (strain OS223)).